The primary structure comprises 87 residues: MANIKSAKKRAVQSEKHRLHNASRRSMVRTFVRKVYNAILTQDKKAAQQAFSAMQPIVDRQASKGLIHKNKAARYKSHLITQINKMH.

The disordered stretch occupies residues 1-25; that stretch reads MANIKSAKKRAVQSEKHRLHNASRR.

It belongs to the bacterial ribosomal protein bS20 family.

In terms of biological role, binds directly to 16S ribosomal RNA. This Baumannia cicadellinicola subsp. Homalodisca coagulata protein is Small ribosomal subunit protein bS20.